A 204-amino-acid polypeptide reads, in one-letter code: Serotonin N-acetyltransferase (204 aa).

T28 bears the Phosphothreonine; by PKA mark. Positions 32 to 193 constitute an N-acetyltransferase domain; sequence SEFRCLTPED…SFTELHCSLQ (162 aa). Substrate is bound at residue L121. Acetyl-CoA-binding positions include 121 to 123 and 129 to 134; these read LAV and QQGRGP. Residue M156 participates in substrate binding. 165 to 167 contributes to the acetyl-CoA binding site; that stretch reads YER. A Phosphoserine modification is found at S202.

It belongs to the acetyltransferase family. AANAT subfamily. As to quaternary structure, monomer. Interacts with several 14-3-3 proteins, including YWHAB, YWHAE, YWHAG and YWHAZ, preferentially when phosphorylated at Thr-28. Phosphorylation on Ser-202 also allows binding to YWHAZ, but with lower affinity. The interaction with YWHAZ considerably increases affinity for arylalkylamines and acetyl-CoA and protects the enzyme from dephosphorylation and proteasomal degradation. It may also prevent thiol-dependent inactivation. Post-translationally, cAMP-dependent phosphorylation regulates AANAT activity by promoting interaction with 14-3-3 proteins. Phosphorylation levels exhibit night/day variations, with an increase during nighttime. Highly expressed in pineal gland and in the photoreceptor outer segments in the retina. Expressed at about 100-fold lower levels in the pituitary gland and testis. Not detected in other tissues.

Its subcellular location is the cytoplasm. It carries out the reaction a 2-arylethylamine + acetyl-CoA = an N-acetyl-2-arylethylamine + CoA + H(+). The protein operates within aromatic compound metabolism; melatonin biosynthesis; melatonin from serotonin: step 1/2. Functionally, controls the night/day rhythm of melatonin production in the pineal gland. Catalyzes the N-acetylation of serotonin into N-acetylserotonin, the penultimate step in the synthesis of melatonin. The protein is Serotonin N-acetyltransferase (AANAT) of Macaca mulatta (Rhesus macaque).